Consider the following 314-residue polypeptide: Putative S-adenosyl-L-methionine-dependent methyltransferase MUL_4402 (314 aa).

Residues Asp-132 and 161-162 (DL) each bind S-adenosyl-L-methionine. The segment at 291–314 (RPVPDDAEGPVPPTLFVSAHRPAA) is disordered.

The protein belongs to the UPF0677 family.

Functionally, exhibits S-adenosyl-L-methionine-dependent methyltransferase activity. The chain is Putative S-adenosyl-L-methionine-dependent methyltransferase MUL_4402 from Mycobacterium ulcerans (strain Agy99).